The following is a 44-amino-acid chain: Photosystem I reaction center subunit IX (44 aa).

A helical membrane pass occupies residues 7-27; that stretch reads YLSVAPVLSTLWFASLAGLLI.

This sequence belongs to the PsaJ family.

It localises to the plastid. Its subcellular location is the chloroplast thylakoid membrane. Functionally, may help in the organization of the PsaE and PsaF subunits. The polypeptide is Photosystem I reaction center subunit IX (Barbarea verna (Land cress)).